Here is a 218-residue protein sequence, read N- to C-terminus: Ribose-5-phosphate isomerase A (218 aa).

Residues threonine 28–threonine 31, aspartate 81–aspartate 84, and lysine 94–glycine 97 contribute to the substrate site. Glutamate 103 functions as the Proton acceptor in the catalytic mechanism. Lysine 121 lines the substrate pocket.

The protein belongs to the ribose 5-phosphate isomerase family. In terms of assembly, homodimer.

It catalyses the reaction aldehydo-D-ribose 5-phosphate = D-ribulose 5-phosphate. Its pathway is carbohydrate degradation; pentose phosphate pathway; D-ribose 5-phosphate from D-ribulose 5-phosphate (non-oxidative stage): step 1/1. Functionally, catalyzes the reversible conversion of ribose-5-phosphate to ribulose 5-phosphate. This chain is Ribose-5-phosphate isomerase A, found in Shewanella piezotolerans (strain WP3 / JCM 13877).